A 270-amino-acid polypeptide reads, in one-letter code: MTLRIGVVGAGGRMGRQLIQAIHAAEGVELSAAFERKGSSLIGSDAGELAGIGHIGVTVEESLTDRADNFDVLIDFTRPEGSLEHLACCAAKGKNVILGTTGFDDAGKAAIKAAAEKIGIVFASNYSVGVNLVFKLLEKAAKVMGDYCDIEIIEAHHRHKVDAPSGTALSMGEHIAKTLGRDLKTHGVFCREGITGERKRDEIGFSTIRAADVVGEHTVWFADIGERVEIAHKASSRMTFANGAVRAAKWIADKKQGLFDMTDVLDLNNL.

NAD(+)-binding positions include 9-14 (GAGGRM) and glutamate 35. Arginine 36 lines the NADP(+) pocket. NAD(+) contacts are provided by residues 99-101 (GTT) and 123-126 (ASNY). The active-site Proton donor/acceptor is histidine 156. Histidine 157 is a binding site for (S)-2,3,4,5-tetrahydrodipicolinate. Lysine 160 acts as the Proton donor in catalysis. (S)-2,3,4,5-tetrahydrodipicolinate is bound at residue 166–167 (GT).

Belongs to the DapB family.

It is found in the cytoplasm. It catalyses the reaction (S)-2,3,4,5-tetrahydrodipicolinate + NAD(+) + H2O = (2S,4S)-4-hydroxy-2,3,4,5-tetrahydrodipicolinate + NADH + H(+). The catalysed reaction is (S)-2,3,4,5-tetrahydrodipicolinate + NADP(+) + H2O = (2S,4S)-4-hydroxy-2,3,4,5-tetrahydrodipicolinate + NADPH + H(+). Its pathway is amino-acid biosynthesis; L-lysine biosynthesis via DAP pathway; (S)-tetrahydrodipicolinate from L-aspartate: step 4/4. Catalyzes the conversion of 4-hydroxy-tetrahydrodipicolinate (HTPA) to tetrahydrodipicolinate. The sequence is that of 4-hydroxy-tetrahydrodipicolinate reductase from Actinobacillus succinogenes (strain ATCC 55618 / DSM 22257 / CCUG 43843 / 130Z).